Here is a 2453-residue protein sequence, read N- to C-terminus: Tyrosine-protein phosphatase non-receptor type 13 (2453 aa).

A KIND domain is found at 3 to 190; the sequence is VSLAEALEVR…SGTDPLSRSS (188 aa). The segment at 183-227 is disordered; sequence TDPLSRSSEQKPDRSQAIRDRLRGKGLPTGRSSTSDALDTHEAPL. Basic and acidic residues predominate over residues 190 to 205; sequence SEQKPDRSQAIRDRLR. Serine 240 carries the phosphoserine modification. The tract at residues 253-285 is disordered; the sequence is EDYLKDTPSDNNSRHEDSETFSSPYQFKTSTPQ. Positions 256 to 270 are enriched in basic and acidic residues; it reads LKDTPSDNNSRHEDS. Positions 272–285 are enriched in polar residues; it reads TFSSPYQFKTSTPQ. A phosphoserine mark is found at serine 297 and serine 298. The disordered stretch occupies residues 429-457; the sequence is SEASKRFESSSGLPGVDETGQTRPSRQYE. Residues 447-457 show a composition bias toward polar residues; the sequence is TGQTRPSRQYE. The stretch at 458–493 forms a coiled coil; sequence TSLEGNLINQDIMLRRQEEEMMQLQARMALRQSRLS. The FERM domain occupies 565–865; the sequence is RKVNIRLLSG…SQHKFQLQMR (301 aa). Serine 883, serine 890, serine 901, serine 904, and serine 907 each carry phosphoserine. Residues 944-957 are compositionally biased toward basic and acidic residues; it reads KEKTDKASWEEKPR. Disordered regions lie at residues 944–966 and 1007–1063; these read KEKT…YHDL and LAGL…VPFK. Phosphoserine occurs at positions 1021 and 1025. Residues 1025–1034 are compositionally biased toward basic and acidic residues; it reads SPERRNHESD. Over residues 1049–1058 the composition is skewed to low complexity; it reads SLPSSGKSSS. Serine 1076 carries the post-translational modification Phosphoserine. Positions 1084–1170 constitute a PDZ 1 domain; that stretch reads LVNLKKDPKH…DVTLVISQPK (87 aa). 2 disordered regions span residues 1199 to 1356 and 1441 to 1478; these read DSAM…GDTF and GQVP…TPHV. Serine 1221 is modified (phosphoserine). 2 stretches are compositionally biased toward polar residues: residues 1242–1252 and 1267–1279; these read ESASLSQSQVN and PQHS…VTTK. A Phosphoserine modification is found at serine 1270. Residues 1297–1315 show a composition bias toward basic and acidic residues; it reads GISDLIEHLDCADSDKDDS. Residues 1331-1341 are compositionally biased toward low complexity; the sequence is SSSLSTSNKTS. The PDZ 2 domain maps to 1357–1442; the sequence is EVELAKTDGS…VVHLLLEKGQ (86 aa). Positions 1467-1478 are enriched in basic and acidic residues; sequence APEKVAKQTPHV. The region spanning 1491 to 1579 is the PDZ 3 domain; that stretch reads EVKLFKNSSG…EVSLLLCRPA (89 aa). Positions 1602–1629 are enriched in polar residues; it reads LNSSKETSQPSSSVEQGASSDDNGVSGK. Disordered regions lie at residues 1602–1662 and 1695–1726; these read LNSS…AKMP and KLES…SDAT. Positions 1638 to 1655 are enriched in basic and acidic residues; that stretch reads SRRESYSDHSESGEDDSV. PDZ domains follow at residues 1764-1845 and 1857-1942; these read LITL…GRIL and LPDI…TRDG. 2 disordered regions span residues 1991–2024 and 2051–2139; these read EAVC…DDIY and RHAT…DPPF. Residues 2012-2021 are compositionally biased toward basic and acidic residues; that stretch reads ETKESNSRDD. A Tyrosine-protein phosphatase domain is found at 2180-2434; that stretch reads PSKELENLQE…VFCYQVILYV (255 aa). Residues aspartate 2345, 2375–2381, and glutamine 2419 contribute to the substrate site; that span reads CSAGIGR. The active-site Phosphocysteine intermediate is the cysteine 2375.

Belongs to the protein-tyrosine phosphatase family. Non-receptor class subfamily. As to quaternary structure, interacts (via the first PDZ domain) with PLEKHA1 and PLEKHA2. Interacts (via the second PDZ domain) with TNFRSF6 (Fas receptor) (via C-terminus). Interacts (via the second PDZ domain) with TRIP6 (via the third LIM domain and C-terminus). Interacts (via the third PDZ domain) with NGFR (via C-terminal SVP motif) and PKN2 (via C-terminus). Interacts (via the second or fourth PDZ domains) with PDLIM4 (via C-terminus only or via combined C-terminus and LIM domain, but not LIM domain only). Found in a complex with PDLIM4 and TRIP6. Interacts with PDLIM4; this interaction results in dephosphorylation of SRC 'Tyr-419' by this protein leading to its inactivation. Interacts with BRD7. Interacts with RAPGEF6. Interacts with ARHGAP29. Interacts with PIK3R2; dephosphorylates PIK3R2. Interacts with FBXL2. Interacts (via the FERM domain) with ENTR1. Found in a complex with ENTR1, PTPN13 and GIT1. Expressed predominantly in kidney and, to a lesser extent, in lung, heart, brain and testis.

The protein localises to the cytoplasm. Its subcellular location is the cytoskeleton. The protein resides in the nucleus. It is found in the cell projection. It localises to the lamellipodium. The enzyme catalyses O-phospho-L-tyrosyl-[protein] + H2O = L-tyrosyl-[protein] + phosphate. Functionally, tyrosine phosphatase which negatively regulates FAS-induced apoptosis and NGFR-mediated pro-apoptotic signaling. May regulate phosphoinositide 3-kinase (PI3K) signaling through dephosphorylation of PIK3R2. This is Tyrosine-protein phosphatase non-receptor type 13 (Ptpn13) from Mus musculus (Mouse).